Reading from the N-terminus, the 127-residue chain is Large ribosomal subunit protein bL20 (127 aa).

This sequence belongs to the bacterial ribosomal protein bL20 family.

Its function is as follows. Binds directly to 23S ribosomal RNA and is necessary for the in vitro assembly process of the 50S ribosomal subunit. It is not involved in the protein synthesizing functions of that subunit. This Streptomyces avermitilis (strain ATCC 31267 / DSM 46492 / JCM 5070 / NBRC 14893 / NCIMB 12804 / NRRL 8165 / MA-4680) protein is Large ribosomal subunit protein bL20.